We begin with the raw amino-acid sequence, 257 residues long: Snake venom serine protease Dav-KN (257 aa).

The N-terminal stretch at 1–18 is a signal peptide; it reads MVLIRVLANLLILQLSYA. Positions 19 to 24 are excised as a propeptide; it reads QKSSEL. The 224-residue stretch at 25 to 248 folds into the Peptidase S1 domain; the sequence is VIGGDECNIN…HLDWIKGIIA (224 aa). 5 cysteine pairs are disulfide-bonded: cysteine 31–cysteine 162, cysteine 49–cysteine 65, cysteine 97–cysteine 255, cysteine 173–cysteine 188, and cysteine 199–cysteine 224. Active-site charge relay system residues include histidine 64 and aspartate 109. Catalysis depends on serine 203, which acts as the Charge relay system.

The protein belongs to the peptidase S1 family. Snake venom subfamily. In terms of assembly, monomer. In terms of tissue distribution, expressed by the venom gland.

The protein localises to the secreted. Snake venom serine protease that may act in the hemostasis system of the prey. The polypeptide is Snake venom serine protease Dav-KN (Deinagkistrodon acutus (Hundred-pace snake)).